The sequence spans 410 residues: Multifunctional CCA protein (410 aa).

The ATP site is built by glycine 8 and arginine 11. CTP contacts are provided by glycine 8 and arginine 11. 2 residues coordinate Mg(2+): aspartate 21 and aspartate 23. Residues arginine 91, arginine 138, and arginine 141 each coordinate ATP. CTP contacts are provided by arginine 91, arginine 138, and arginine 141. Positions 229–347 (TGIHQEMVSD…AQLALVCEAD (119 aa)) constitute an HD domain.

Belongs to the tRNA nucleotidyltransferase/poly(A) polymerase family. Bacterial CCA-adding enzyme type 1 subfamily. Monomer. Can also form homodimers and oligomers. Mg(2+) serves as cofactor. Ni(2+) is required as a cofactor.

It catalyses the reaction a tRNA precursor + 2 CTP + ATP = a tRNA with a 3' CCA end + 3 diphosphate. The enzyme catalyses a tRNA with a 3' CCA end + 2 CTP + ATP = a tRNA with a 3' CCACCA end + 3 diphosphate. In terms of biological role, catalyzes the addition and repair of the essential 3'-terminal CCA sequence in tRNAs without using a nucleic acid template. Adds these three nucleotides in the order of C, C, and A to the tRNA nucleotide-73, using CTP and ATP as substrates and producing inorganic pyrophosphate. tRNA 3'-terminal CCA addition is required both for tRNA processing and repair. Also involved in tRNA surveillance by mediating tandem CCA addition to generate a CCACCA at the 3' terminus of unstable tRNAs. While stable tRNAs receive only 3'-terminal CCA, unstable tRNAs are marked with CCACCA and rapidly degraded. The chain is Multifunctional CCA protein from Xanthomonas euvesicatoria pv. vesicatoria (strain 85-10) (Xanthomonas campestris pv. vesicatoria).